The following is a 182-amino-acid chain: Crossover junction endodeoxyribonuclease RuvC (182 aa).

Catalysis depends on residues D7, E68, and D141. D7, E68, and D141 together coordinate Mg(2+).

Belongs to the RuvC family. In terms of assembly, homodimer which binds Holliday junction (HJ) DNA. The HJ becomes 2-fold symmetrical on binding to RuvC with unstacked arms; it has a different conformation from HJ DNA in complex with RuvA. In the full resolvosome a probable DNA-RuvA(4)-RuvB(12)-RuvC(2) complex forms which resolves the HJ. Requires Mg(2+) as cofactor.

The protein localises to the cytoplasm. It carries out the reaction Endonucleolytic cleavage at a junction such as a reciprocal single-stranded crossover between two homologous DNA duplexes (Holliday junction).. The RuvA-RuvB-RuvC complex processes Holliday junction (HJ) DNA during genetic recombination and DNA repair. Endonuclease that resolves HJ intermediates. Cleaves cruciform DNA by making single-stranded nicks across the HJ at symmetrical positions within the homologous arms, yielding a 5'-phosphate and a 3'-hydroxyl group; requires a central core of homology in the junction. The consensus cleavage sequence is 5'-(A/T)TT(C/G)-3'. Cleavage occurs on the 3'-side of the TT dinucleotide at the point of strand exchange. HJ branch migration catalyzed by RuvA-RuvB allows RuvC to scan DNA until it finds its consensus sequence, where it cleaves and resolves the cruciform DNA. This chain is Crossover junction endodeoxyribonuclease RuvC, found in Thermobifida fusca (strain YX).